Here is a 294-residue protein sequence, read N- to C-terminus: Nucleotide-binding protein LVIS_0651 (294 aa).

12 to 19 lines the ATP pocket; that stretch reads GMSGAGKT. Residue 62-65 participates in GTP binding; that stretch reads DLRS.

Belongs to the RapZ-like family.

Its function is as follows. Displays ATPase and GTPase activities. In Levilactobacillus brevis (strain ATCC 367 / BCRC 12310 / CIP 105137 / JCM 1170 / LMG 11437 / NCIMB 947 / NCTC 947) (Lactobacillus brevis), this protein is Nucleotide-binding protein LVIS_0651.